The following is a 317-amino-acid chain: Transaldolase (317 aa).

Residue Lys-132 is the Schiff-base intermediate with substrate of the active site.

It belongs to the transaldolase family. Type 1 subfamily. In terms of assembly, homodimer.

Its subcellular location is the cytoplasm. It catalyses the reaction D-sedoheptulose 7-phosphate + D-glyceraldehyde 3-phosphate = D-erythrose 4-phosphate + beta-D-fructose 6-phosphate. The protein operates within carbohydrate degradation; pentose phosphate pathway; D-glyceraldehyde 3-phosphate and beta-D-fructose 6-phosphate from D-ribose 5-phosphate and D-xylulose 5-phosphate (non-oxidative stage): step 2/3. In terms of biological role, transaldolase is important for the balance of metabolites in the pentose-phosphate pathway. The protein is Transaldolase of Yersinia enterocolitica serotype O:8 / biotype 1B (strain NCTC 13174 / 8081).